A 445-amino-acid chain; its full sequence is Tubulin beta-4 chain (445 aa).

The short motif at 1 to 4 (MREI) is the MREI motif element. GTP-binding residues include Q11, E69, S138, G142, T143, G144, N204, and N226. E69 contacts Mg(2+). The interval 425–445 (YQDATAEEEGEFEEGEEEENA) is disordered. The span at 429 to 445 (TAEEEGEFEEGEEEENA) shows a compositional bias: acidic residues. E438 is modified (5-glutamyl polyglutamate).

This sequence belongs to the tubulin family. As to quaternary structure, dimer of alpha and beta chains. A typical microtubule is a hollow water-filled tube with an outer diameter of 25 nm and an inner diameter of 15 nM. Alpha-beta heterodimers associate head-to-tail to form protofilaments running lengthwise along the microtubule wall with the beta-tubulin subunit facing the microtubule plus end conferring a structural polarity. Microtubules usually have 13 protofilaments but different protofilament numbers can be found in some organisms and specialized cells. Mg(2+) serves as cofactor. In terms of processing, some glutamate residues at the C-terminus are polyglycylated, resulting in polyglycine chains on the gamma-carboxyl group. Glycylation is mainly limited to tubulin incorporated into axonemes (cilia and flagella) whereas glutamylation is prevalent in neuronal cells, centrioles, axonemes, and the mitotic spindle. Both modifications can coexist on the same protein on adjacent residues, and lowering polyglycylation levels increases polyglutamylation, and reciprocally. The precise function of polyglycylation is still unclear. Post-translationally, some glutamate residues at the C-terminus are polyglutamylated, resulting in polyglutamate chains on the gamma-carboxyl group. Polyglutamylation plays a key role in microtubule severing by spastin (SPAST). SPAST preferentially recognizes and acts on microtubules decorated with short polyglutamate tails: severing activity by SPAST increases as the number of glutamates per tubulin rises from one to eight, but decreases beyond this glutamylation threshold. In terms of tissue distribution, preferential expression in germ cells.

It is found in the cytoplasm. It localises to the cytoskeleton. Functionally, tubulin is the major constituent of microtubules, a cylinder consisting of laterally associated linear protofilaments composed of alpha- and beta-tubulin heterodimers. Microtubules grow by the addition of GTP-tubulin dimers to the microtubule end, where a stabilizing cap forms. Below the cap, tubulin dimers are in GDP-bound state, owing to GTPase activity of alpha-tubulin. This Xenopus laevis (African clawed frog) protein is Tubulin beta-4 chain (tubb4).